Here is a 562-residue protein sequence, read N- to C-terminus: Tripeptidyl-peptidase 1 (562 aa).

The N-terminal stretch at 1–19 (MGLQARLLGLLALVIAGKC) is a signal peptide. A propeptide spans 20–194 (TYNPEPDQRW…PEPQQVGTVS (175 aa)) (removed in mature form). The cysteines at positions 111 and 122 are disulfide-linked. The region spanning 198-562 (GVTPSVLRQR…PALLKTLLNP (365 aa)) is the Peptidase S53 domain. N-linked (GlcNAc...) asparagine glycosylation is present at Asn209. Asn221 is a glycosylation site (N-linked (GlcNAc...) (high mannose) asparagine). Catalysis depends on charge relay system residues Glu271 and Asp275. N-linked (GlcNAc...) asparagine glycans are attached at residues Asn285, Asn312, and Asn442. 2 cysteine pairs are disulfide-bonded: Cys364–Cys525 and Cys521–Cys536. Catalysis depends on Ser474, which acts as the Charge relay system. Asp516 and Val517 together coordinate Ca(2+). Positions 538, 540, and 542 each coordinate Ca(2+).

As to quaternary structure, monomer. Interacts with CLN5. Interacts with CLN3. Requires Ca(2+) as cofactor. Post-translationally, activated by autocatalytic proteolytical processing upon acidification. N-glycosylation is required for processing and activity.

The protein localises to the lysosome. The protein resides in the melanosome. It carries out the reaction Release of an N-terminal tripeptide from a polypeptide, but also has endopeptidase activity.. Functionally, lysosomal serine protease with tripeptidyl-peptidase I activity. May act as a non-specific lysosomal peptidase which generates tripeptides from the breakdown products produced by lysosomal proteinases. Requires substrates with an unsubstituted N-terminus. This is Tripeptidyl-peptidase 1 (Tpp1) from Mus musculus (Mouse).